Here is a 100-residue protein sequence, read N- to C-terminus: Putative antiporter subunit mnhF2 (100 aa).

3 helical membrane passes run 5–25 (ITHI…IICL), 38–60 (VVTF…VLMG), and 70–92 (LIAI…GHVF).

Belongs to the CPA3 antiporters (TC 2.A.63) subunit F family. May form a heterooligomeric complex that consists of seven subunits: mnhA2, mnhB2, mnhC2, mnhD2, mnhE2, mnhF2 and mnhG2.

Its subcellular location is the cell membrane. The sequence is that of Putative antiporter subunit mnhF2 (mnhF2) from Staphylococcus aureus (strain USA300).